An 84-amino-acid polypeptide reads, in one-letter code: uncharacterized protein (84 aa).

This is an uncharacterized protein from Escherichia coli O6:H1 (strain CFT073 / ATCC 700928 / UPEC).